Consider the following 622-residue polypeptide: Low affinity potassium transport system protein Kup (622 aa).

12 helical membrane-spanning segments follow: residues 9-29, 49-69, 103-123, 137-157, 165-185, 213-233, 247-267, 276-296, 337-357, 363-383, 396-416, and 419-439; these read LPAI…TSPL, VFGF…IKYL, VIMG…TPAI, PQLD…LFMI, VGKL…GLGL, VSFI…ALYA, WFTV…ALLL, PFFL…AALA, IYIP…IVSF, LAAA…ILST, FVAL…TANL, and LLSG…VMTT.

The protein belongs to the HAK/KUP transporter (TC 2.A.72) family.

The protein resides in the cell inner membrane. The enzyme catalyses K(+)(in) + H(+)(in) = K(+)(out) + H(+)(out). Functionally, responsible for the low-affinity transport of potassium into the cell. Likely operates as a K(+):H(+) symporter. The protein is Low affinity potassium transport system protein Kup of Escherichia coli O157:H7 (strain EC4115 / EHEC).